Consider the following 61-residue polypeptide: Small ribosomal subunit protein uS14B (61 aa).

Residues Cys-24, Cys-27, Cys-40, and Cys-43 each coordinate Zn(2+).

It belongs to the universal ribosomal protein uS14 family. Zinc-binding uS14 subfamily. Part of the 30S ribosomal subunit. Contacts proteins S3 and S10. Zn(2+) serves as cofactor.

In terms of biological role, binds 16S rRNA, required for the assembly of 30S particles and may also be responsible for determining the conformation of the 16S rRNA at the A site. The protein is Small ribosomal subunit protein uS14B of Mycolicibacterium smegmatis (strain ATCC 700084 / mc(2)155) (Mycobacterium smegmatis).